Here is a 251-residue protein sequence, read N- to C-terminus: Adenosylcobinamide-GDP ribazoletransferase (251 aa).

7 consecutive transmembrane segments (helical) span residues leucine 36–serine 56, valine 60–leucine 80, valine 110–phenylalanine 130, isoleucine 141–glutamate 161, glutamate 181–isoleucine 201, asparagine 202–lysine 222, and aspartate 231–isoleucine 251.

This sequence belongs to the CobS family. It depends on Mg(2+) as a cofactor.

It localises to the cell membrane. It catalyses the reaction alpha-ribazole + adenosylcob(III)inamide-GDP = adenosylcob(III)alamin + GMP + H(+). The enzyme catalyses alpha-ribazole 5'-phosphate + adenosylcob(III)inamide-GDP = adenosylcob(III)alamin 5'-phosphate + GMP + H(+). It participates in cofactor biosynthesis; adenosylcobalamin biosynthesis; adenosylcobalamin from cob(II)yrinate a,c-diamide: step 7/7. Its function is as follows. Joins adenosylcobinamide-GDP and alpha-ribazole to generate adenosylcobalamin (Ado-cobalamin). Also synthesizes adenosylcobalamin 5'-phosphate from adenosylcobinamide-GDP and alpha-ribazole 5'-phosphate. The chain is Adenosylcobinamide-GDP ribazoletransferase from Clostridium perfringens (strain ATCC 13124 / DSM 756 / JCM 1290 / NCIMB 6125 / NCTC 8237 / Type A).